Here is a 145-residue protein sequence, read N- to C-terminus: Transcription factor MEE8 (145 aa).

A compositionally biased stretch (basic and acidic residues) spans 33–49 (EKGVEKVGQKRSAESRR). Residues 33–61 (EKGVEKVGQKRSAESRREGKKKRVKTQCV) form a disordered region. Positions 66–115 (DKSDHDTLLKKKRRERIRRQLETLKEITPNCPQSDINAILDCVIEYTNNL) constitute a bHLH domain.

In terms of assembly, homodimer.

The protein localises to the nucleus. Required during early embryo development, for the endosperm formation. The polypeptide is Transcription factor MEE8 (MEE8) (Arabidopsis thaliana (Mouse-ear cress)).